Reading from the N-terminus, the 235-residue chain is Probable deoxycytidine kinase FPV151 (235 aa).

30–38 (GNISAGKST) contacts ATP. Substrate-binding residues include Glu53, Tyr68, and Gln79. Glu104 functions as the Proton acceptor in the catalytic mechanism. Residues Arg105, Asp110, and Glu172 each contribute to the substrate site.

It belongs to the DCK/DGK family.

It catalyses the reaction 2'-deoxycytidine + a ribonucleoside 5'-triphosphate = dCMP + a ribonucleoside 5'-diphosphate + H(+). This Vertebrata (FPV) protein is Probable deoxycytidine kinase FPV151.